Consider the following 153-residue polypeptide: Carbohydrate-binding protein AWN (153 aa).

The signal sequence occupies residues 1–20 (MKLAAPSLALLLSTATLVSG). Ala21 carries the post-translational modification N-acetylalanine. 2 disulfide bridges follow: Cys29–Cys50 and Cys73–Cys94. Positions 29 to 130 (CGGVLRDPPG…SPFHIYYYAD (102 aa)) constitute a CUB domain. Residues 93–130 (ICGGISLVFRSSSNIATIKYLRTSGQRASPFHIYYYAD) are heparin-binding.

The protein belongs to the spermadhesin family. Post-translationally, partial N-acetylation differentiates isoforms AWN-1 (not acetylated) and AWN-2 (acetylated).

The protein resides in the secreted. Its function is as follows. AWN proteins mediate the binding of boar spermatozoa to component(s) of the egg's zona pellucida by a carbohydrate-binding mechanism. Awn proteins are secretory components of the male accessory glands being coated to the sperm surface at the time of ejaculation. They possess as well heparin-, serine-protease-inhibitor-binding capability. This chain is Carbohydrate-binding protein AWN, found in Sus scrofa (Pig).